The following is a 128-amino-acid chain: Large ribosomal subunit protein eL8 (128 aa).

It belongs to the eukaryotic ribosomal protein eL8 family. As to quaternary structure, part of the 50S ribosomal subunit. Probably part of the RNase P complex.

It localises to the cytoplasm. Its function is as follows. Multifunctional RNA-binding protein that recognizes the K-turn motif in ribosomal RNA, the RNA component of RNase P, box H/ACA, box C/D and box C'/D' sRNAs. In Staphylothermus marinus (strain ATCC 43588 / DSM 3639 / JCM 9404 / F1), this protein is Large ribosomal subunit protein eL8.